Reading from the N-terminus, the 946-residue chain is Bifunctional glutamine synthetase adenylyltransferase/adenylyl-removing enzyme (946 aa).

The tract at residues 1-440 (MKPLSSPLQQ…VFNELIGDDE (440 aa)) is adenylyl removase. The tract at residues 449 to 946 (SEQWRELWQD…ASWQKWLVEE (498 aa)) is adenylyl transferase.

It belongs to the GlnE family. The cofactor is Mg(2+).

It carries out the reaction [glutamine synthetase]-O(4)-(5'-adenylyl)-L-tyrosine + phosphate = [glutamine synthetase]-L-tyrosine + ADP. The enzyme catalyses [glutamine synthetase]-L-tyrosine + ATP = [glutamine synthetase]-O(4)-(5'-adenylyl)-L-tyrosine + diphosphate. Its function is as follows. Involved in the regulation of glutamine synthetase GlnA, a key enzyme in the process to assimilate ammonia. When cellular nitrogen levels are high, the C-terminal adenylyl transferase (AT) inactivates GlnA by covalent transfer of an adenylyl group from ATP to specific tyrosine residue of GlnA, thus reducing its activity. Conversely, when nitrogen levels are low, the N-terminal adenylyl removase (AR) activates GlnA by removing the adenylyl group by phosphorolysis, increasing its activity. The regulatory region of GlnE binds the signal transduction protein PII (GlnB) which indicates the nitrogen status of the cell. This Shigella flexneri protein is Bifunctional glutamine synthetase adenylyltransferase/adenylyl-removing enzyme.